The primary structure comprises 289 residues: 4-hydroxybenzoate octaprenyltransferase (289 aa).

A run of 8 helical transmembrane segments spans residues 21-40 (PIGT…LAAG), 95-115 (VLAL…TMNS), 116-136 (LTIA…FMKR), 138-158 (IPIP…MAYA), 161-181 (ANAL…WTIA), 213-233 (IIGV…QLMG), 236-256 (AWYY…QRLI), and 268-288 (FLNN…NYLL).

This sequence belongs to the UbiA prenyltransferase family. The cofactor is Mg(2+).

Its subcellular location is the cell inner membrane. The enzyme catalyses all-trans-octaprenyl diphosphate + 4-hydroxybenzoate = 4-hydroxy-3-(all-trans-octaprenyl)benzoate + diphosphate. It functions in the pathway cofactor biosynthesis; ubiquinone biosynthesis. In terms of biological role, catalyzes the prenylation of para-hydroxybenzoate (PHB) with an all-trans polyprenyl group. Mediates the second step in the final reaction sequence of ubiquinone-8 (UQ-8) biosynthesis, which is the condensation of the polyisoprenoid side chain with PHB, generating the first membrane-bound Q intermediate 3-octaprenyl-4-hydroxybenzoate. In Aeromonas salmonicida (strain A449), this protein is 4-hydroxybenzoate octaprenyltransferase.